The primary structure comprises 98 residues: NADH-ubiquinone oxidoreductase chain 4L (98 aa).

A run of 3 helical transmembrane segments spans residues 1–21, 29–49, and 61–81; these read MSMVYFNIFMAFTVSLVGLLM, SLLCLEGMMLSLFVLMSMTIL, and IILLVFAACEAALGLSLLVMV.

It belongs to the complex I subunit 4L family. Core subunit of respiratory chain NADH dehydrogenase (Complex I) which is composed of 45 different subunits.

It is found in the mitochondrion inner membrane. The enzyme catalyses a ubiquinone + NADH + 5 H(+)(in) = a ubiquinol + NAD(+) + 4 H(+)(out). Functionally, core subunit of the mitochondrial membrane respiratory chain NADH dehydrogenase (Complex I) which catalyzes electron transfer from NADH through the respiratory chain, using ubiquinone as an electron acceptor. Part of the enzyme membrane arm which is embedded in the lipid bilayer and involved in proton translocation. This chain is NADH-ubiquinone oxidoreductase chain 4L (MT-ND4L), found in Otaria byronia (South American sea lion).